A 180-amino-acid polypeptide reads, in one-letter code: Pro-glucagon (180 aa).

The first 20 residues, 1–20 (MKSLYFVAGLFVMLVQGSWQ), serve as a signal peptide directing secretion. Over residues 25–35 (NTEEKSSSFPA) the composition is skewed to polar residues. A disordered region spans residues 25-59 (NTEEKSSSFPAPQTDPLGDPDQINEDKRHSQGTFT). Ser-54 bears the Phosphoserine mark. The propeptide occupies 84-89 (NKNNIA). 2 positions are modified to phosphoserine: Ser-105 and Ser-108. Arg-127 carries the arginine amide modification. Positions 131 to 145 (DFPEEVNIVEELRRR) are excised as a propeptide. 2 positions are modified to phosphoserine: Ser-150 and Ser-152.

Belongs to the glucagon family. Post-translationally, proglucagon is post-translationally processed in a tissue-specific manner in pancreatic A cells and intestinal L cells. In pancreatic A cells, the major bioactive hormone is glucagon cleaved by PCSK2/PC2. In the intestinal L cells PCSK1/PC1 liberates GLP-1, GLP-2, glicentin and oxyntomodulin. GLP-1 is further N-terminally truncated by post-translational processing in the intestinal L cells resulting in GLP-1(7-37) GLP-1-(7-36)amide. The C-terminal amidation is neither important for the metabolism of GLP-1 nor for its effects on the endocrine pancreas. As to expression, glucagon is secreted in the A cells of the islets of Langerhans. GLP-1, GLP-2, oxyntomodulin and glicentin are secreted from enteroendocrine cells throughout the gastrointestinal tract.

It is found in the secreted. Its function is as follows. Plays a key role in glucose metabolism and homeostasis. Regulates blood glucose by increasing gluconeogenesis and decreasing glycolysis. A counterregulatory hormone of insulin, raises plasma glucose levels in response to insulin-induced hypoglycemia. Plays an important role in initiating and maintaining hyperglycemic conditions in diabetes. Functionally, potent stimulator of glucose-dependent insulin release. Also stimulates insulin release in response to IL6. Plays important roles on gastric motility and the suppression of plasma glucagon levels. May be involved in the suppression of satiety and stimulation of glucose disposal in peripheral tissues, independent of the actions of insulin. Has growth-promoting activities on intestinal epithelium. May also regulate the hypothalamic pituitary axis (HPA) via effects on LH, TSH, CRH, oxytocin, and vasopressin secretion. Increases islet mass through stimulation of islet neogenesis and pancreatic beta cell proliferation. Inhibits beta cell apoptosis. Stimulates intestinal growth and up-regulates villus height in the small intestine, concomitant with increased crypt cell proliferation and decreased enterocyte apoptosis. The gastrointestinal tract, from the stomach to the colon is the principal target for GLP-2 action. Plays a key role in nutrient homeostasis, enhancing nutrient assimilation through enhanced gastrointestinal function, as well as increasing nutrient disposal. Stimulates intestinal glucose transport and decreases mucosal permeability. In terms of biological role, significantly reduces food intake. Inhibits gastric emptying in humans. Suppression of gastric emptying may lead to increased gastric distension, which may contribute to satiety by causing a sensation of fullness. Its function is as follows. May modulate gastric acid secretion and the gastro-pyloro-duodenal activity. May play an important role in intestinal mucosal growth in the early period of life. In Bos taurus (Bovine), this protein is Pro-glucagon (GCG).